A 556-amino-acid chain; its full sequence is ATP synthase subunit beta-1, mitochondrial (556 aa).

Low complexity predominate over residues 1-20 (MASRRVLSSLLRSSSGRSAA). The disordered stretch occupies residues 1–37 (MASRRVLSSLLRSSSGRSAAKLGNRNPRLPSPSPARH). Residues 1 to 51 (MASRRVLSSLLRSSSGRSAAKLGNRNPRLPSPSPARHAAPCSYLLGRVAEY) constitute a mitochondrion transit peptide. Ser59 carries the post-translational modification Phosphoserine. 231–238 (GGAGVGKT) is an ATP binding site.

It belongs to the ATPase alpha/beta chains family. F-type ATPases have 2 components, CF(1) - the catalytic core - and CF(0) - the membrane proton channel. CF(1) has five subunits: alpha(3), beta(3), gamma(1), delta(1), epsilon(1). CF(0) has three main subunits: a, b and c.

It localises to the mitochondrion. The protein resides in the mitochondrion inner membrane. It carries out the reaction ATP + H2O + 4 H(+)(in) = ADP + phosphate + 5 H(+)(out). Its function is as follows. Mitochondrial membrane ATP synthase (F(1)F(0) ATP synthase or Complex V) produces ATP from ADP in the presence of a proton gradient across the membrane which is generated by electron transport complexes of the respiratory chain. F-type ATPases consist of two structural domains, F(1) - containing the extramembraneous catalytic core, and F(0) - containing the membrane proton channel, linked together by a central stalk and a peripheral stalk. During catalysis, ATP synthesis in the catalytic domain of F(1) is coupled via a rotary mechanism of the central stalk subunits to proton translocation. Subunits alpha and beta form the catalytic core in F(1). Rotation of the central stalk against the surrounding alpha(3)beta(3) subunits leads to hydrolysis of ATP in three separate catalytic sites on the beta subunits. This chain is ATP synthase subunit beta-1, mitochondrial, found in Arabidopsis thaliana (Mouse-ear cress).